We begin with the raw amino-acid sequence, 339 residues long: Uroporphyrinogen decarboxylase (339 aa).

Residues 21 to 25 (RQAGR), D71, Y147, S202, and H315 contribute to the substrate site.

This sequence belongs to the uroporphyrinogen decarboxylase family. As to quaternary structure, homodimer.

It localises to the cytoplasm. It carries out the reaction uroporphyrinogen III + 4 H(+) = coproporphyrinogen III + 4 CO2. It functions in the pathway porphyrin-containing compound metabolism; protoporphyrin-IX biosynthesis; coproporphyrinogen-III from 5-aminolevulinate: step 4/4. In terms of biological role, catalyzes the decarboxylation of four acetate groups of uroporphyrinogen-III to yield coproporphyrinogen-III. This chain is Uroporphyrinogen decarboxylase, found in Helicobacter pylori (strain P12).